The chain runs to 436 residues: N-lysine methyltransferase SMYD2 (436 aa).

Residues 10–244 enclose the SET domain; sequence GGLERFASPG…PGEEVFTSYI (235 aa). 20-22 contacts S-adenosyl-L-methionine; it reads KGR. Zn(2+) contacts are provided by Cys-55, Cys-58, Cys-68, Cys-71, Cys-77, Cys-81, His-89, and Cys-93. Residues 55–93 form an MYND-type zinc finger; sequence CDGCFARKEGLSKCGRCKQAFYCNVECQKEDWPMHKLEC. S-adenosyl-L-methionine is bound by residues His-140, 209 to 210, and 261 to 263; these read NH and YFF.

The protein belongs to the class V-like SAM-binding methyltransferase superfamily.

It is found in the cytoplasm. It localises to the cytosol. The protein localises to the nucleus. It catalyses the reaction L-lysyl(4)-[histone H3] + 3 S-adenosyl-L-methionine = N(6),N(6),N(6)-trimethyl-L-lysyl(4)-[histone H3] + 3 S-adenosyl-L-homocysteine + 3 H(+). The enzyme catalyses L-lysyl-[protein] + S-adenosyl-L-methionine = N(6)-methyl-L-lysyl-[protein] + S-adenosyl-L-homocysteine + H(+). Functionally, protein-lysine N-methyltransferase that methylates both histones and non-histone proteins, including p53/TP53 and RB1. Specifically trimethylates histone H3 'Lys-4' (H3K4me3) in vivo. The activity requires interaction with HSP90alpha. Shows even higher methyltransferase activity on p53/TP53. Monomethylates 'Lys-370' of p53/TP53, leading to decreased DNA-binding activity and subsequent transcriptional regulation activity of p53/TP53. Monomethylates RB1 at 'Lys-860'. The chain is N-lysine methyltransferase SMYD2 (SMYD2) from Gallus gallus (Chicken).